Consider the following 634-residue polypeptide: DNA-directed RNA polymerase subunit gamma (634 aa).

Positions 74, 76, 89, and 92 each coordinate Zn(2+). Residues Asp471, Asp473, and Asp475 each contribute to the Mg(2+) site.

Belongs to the RNA polymerase beta' chain family. RpoC1 subfamily. In terms of assembly, in cyanobacteria the RNAP catalytic core is composed of 2 alpha, 1 beta, 1 beta', 1 gamma and 1 omega subunit. When a sigma factor is associated with the core the holoenzyme is formed, which can initiate transcription. Requires Mg(2+) as cofactor. The cofactor is Zn(2+).

It catalyses the reaction RNA(n) + a ribonucleoside 5'-triphosphate = RNA(n+1) + diphosphate. Its function is as follows. DNA-dependent RNA polymerase catalyzes the transcription of DNA into RNA using the four ribonucleoside triphosphates as substrates. The protein is DNA-directed RNA polymerase subunit gamma of Prochlorococcus marinus (strain MIT 9515).